Here is a 439-residue protein sequence, read N- to C-terminus: Probable threonine protease PRSS50 (439 aa).

2 disordered regions span residues 1 to 22 (MEPW…VPGA) and 48 to 130 (ERIR…TMAP). The first 47 residues, 1–47 (MEPWCGAEVRGQGPQGPRVPGASRSRSRALLLLLLLLLLLLPRRPAG), serve as a signal peptide directing secretion. Residues 9–21 (VRGQGPQGPRVPG) are compositionally biased toward low complexity. Residues 48-415 (ERIRPRRPPR…WIWDRLSGEP (368 aa)) lie on the Extracellular side of the membrane. Positions 51 to 61 (RPRRPPRHAHP) are enriched in basic residues. Residues 112-127 (QAQTNQTTTAPPNSQT) are compositionally biased toward low complexity. Asparagine 116 and asparagine 187 each carry an N-linked (GlcNAc...) asparagine glycan. A Peptidase S1 domain is found at 157–412 (FCGSSHEPDP…YRPWIWDRLS (256 aa)). Cysteine 192 and cysteine 208 are disulfide-bonded. Catalysis depends on histidine 207, which acts as the Charge relay system. An N-linked (GlcNAc...) asparagine glycan is attached at asparagine 226. Aspartate 260 (charge relay system) is an active-site residue. Disulfide bonds link cysteine 294/cysteine 370, cysteine 327/cysteine 350, and cysteine 360/cysteine 388. Threonine 364 (charge relay system) is an active-site residue. A helical transmembrane segment spans residues 416–436 (LALPAPSRTLLLAFLLLLILL). At 437 to 439 (GTL) the chain is on the cytoplasmic side.

It belongs to the peptidase S1 family.

It is found in the membrane. May be involved in proteolysis through its threonine endopeptidase activity. In Mus musculus (Mouse), this protein is Probable threonine protease PRSS50 (Prss50).